The sequence spans 255 residues: Triosephosphate isomerase (255 aa).

9–11 contacts substrate; it reads NWK. Residue His96 is the Electrophile of the active site. The active-site Proton acceptor is Glu170. Substrate is bound by residues Gly176, Ser216, and 237–238; that span reads GG.

The protein belongs to the triosephosphate isomerase family. As to quaternary structure, homodimer.

Its subcellular location is the cytoplasm. It carries out the reaction D-glyceraldehyde 3-phosphate = dihydroxyacetone phosphate. The protein operates within carbohydrate biosynthesis; gluconeogenesis. Its pathway is carbohydrate degradation; glycolysis; D-glyceraldehyde 3-phosphate from glycerone phosphate: step 1/1. Involved in the gluconeogenesis. Catalyzes stereospecifically the conversion of dihydroxyacetone phosphate (DHAP) to D-glyceraldehyde-3-phosphate (G3P). This is Triosephosphate isomerase from Magnetococcus marinus (strain ATCC BAA-1437 / JCM 17883 / MC-1).